Consider the following 100-residue polypeptide: Urease subunit gamma (100 aa).

This sequence belongs to the urease gamma subunit family. In terms of assembly, heterotrimer of UreA (gamma), UreB (beta) and UreC (alpha) subunits. Three heterotrimers associate to form the active enzyme.

The protein localises to the cytoplasm. It carries out the reaction urea + 2 H2O + H(+) = hydrogencarbonate + 2 NH4(+). It participates in nitrogen metabolism; urea degradation; CO(2) and NH(3) from urea (urease route): step 1/1. This is Urease subunit gamma from Delftia acidovorans (strain DSM 14801 / SPH-1).